Here is a 376-residue protein sequence, read N- to C-terminus: N-acetyldiaminopimelate deacetylase (376 aa).

Residue D69 is part of the active site. E128 (proton acceptor) is an active-site residue.

It belongs to the peptidase M20A family. N-acetyldiaminopimelate deacetylase subfamily.

The catalysed reaction is N-acetyl-(2S,6S)-2,6-diaminopimelate + H2O = (2S,6S)-2,6-diaminopimelate + acetate. It functions in the pathway amino-acid biosynthesis; L-lysine biosynthesis via DAP pathway; LL-2,6-diaminopimelate from (S)-tetrahydrodipicolinate (acetylase route): step 3/3. Its function is as follows. Catalyzes the conversion of N-acetyl-diaminopimelate to diaminopimelate and acetate. The chain is N-acetyldiaminopimelate deacetylase from Bacillus cytotoxicus (strain DSM 22905 / CIP 110041 / 391-98 / NVH 391-98).